Reading from the N-terminus, the 426-residue chain is MSKSEQLFEKAQKVIPGGVNSPVRAFKGVGGTPVFIQKAEGAYITDSDGKKYIDYVGSWGPMVLGHNHPAIIDAVLKAVPNGLSFGAPTESEITLAELVTKLVPSIELVRMVSSGTEATMSAIRLARGYTGRDKIIKFEGCYHGHSDSLLVKAGSGALTLGQPSGPGVPADFAKHTLTCTYNDLDSVKTAFEQYPNEIACLIVEPVAGNMNCIPPKNDFLKGLRALCDQYGAVFIIDEVMTGFRVALGGAQAYYDVKPDLTTLGKIIGGGMPVGAFGGKKEIMEYIAPTGPVYQAGTLSGNPIAMAAGLACLTELSKAGNEEKLAAQTKTLAEGFKALADKHNVLFTAQYVGGMFGLFFTEQAEITNFQEVMKCDAAKFNRFFHLMLEQGVYLAPSAFEAGFMSLAHSDEDIQATLAAADKAFAQL.

Lysine 265 is subject to N6-(pyridoxal phosphate)lysine.

This sequence belongs to the class-III pyridoxal-phosphate-dependent aminotransferase family. HemL subfamily. Homodimer. Pyridoxal 5'-phosphate serves as cofactor.

The protein resides in the cytoplasm. It carries out the reaction (S)-4-amino-5-oxopentanoate = 5-aminolevulinate. The protein operates within porphyrin-containing compound metabolism; protoporphyrin-IX biosynthesis; 5-aminolevulinate from L-glutamyl-tRNA(Glu): step 2/2. This Actinobacillus pleuropneumoniae serotype 5b (strain L20) protein is Glutamate-1-semialdehyde 2,1-aminomutase.